Reading from the N-terminus, the 259-residue chain is Thiazole synthase (259 aa).

The Schiff-base intermediate with DXP role is filled by lysine 95. Residues glycine 156, 182-183, and 204-205 each bind 1-deoxy-D-xylulose 5-phosphate; these read AG and NT.

This sequence belongs to the ThiG family. In terms of assembly, homotetramer. Forms heterodimers with either ThiH or ThiS.

It localises to the cytoplasm. The catalysed reaction is [ThiS sulfur-carrier protein]-C-terminal-Gly-aminoethanethioate + 2-iminoacetate + 1-deoxy-D-xylulose 5-phosphate = [ThiS sulfur-carrier protein]-C-terminal Gly-Gly + 2-[(2R,5Z)-2-carboxy-4-methylthiazol-5(2H)-ylidene]ethyl phosphate + 2 H2O + H(+). The protein operates within cofactor biosynthesis; thiamine diphosphate biosynthesis. In terms of biological role, catalyzes the rearrangement of 1-deoxy-D-xylulose 5-phosphate (DXP) to produce the thiazole phosphate moiety of thiamine. Sulfur is provided by the thiocarboxylate moiety of the carrier protein ThiS. In vitro, sulfur can be provided by H(2)S. This chain is Thiazole synthase, found in Serratia proteamaculans (strain 568).